A 228-amino-acid polypeptide reads, in one-letter code: F-box protein At5g67140 (228 aa).

The region spanning 4-51 (EAAIDRLPLDLLAYIFSLATSFTVLAQASGVCKKWRKAVNQSMARRET) is the F-box domain.

In Arabidopsis thaliana (Mouse-ear cress), this protein is F-box protein At5g67140.